Here is a 229-residue protein sequence, read N- to C-terminus: Choline-phosphate cytidylyltransferase (229 aa).

CDP-choline contacts are provided by Leu6, Ala8, Gly9, Tyr80, Asn82, Ser85, and Ala101. Asp102 provides a ligand contact to Mg(2+). Tyr185 contributes to the CDP-choline binding site. Mg(2+) contacts are provided by Glu211 and Asp213.

Belongs to the LicC/PntC cytidylyltransferase family. Monomer. Forms dimers in LicC-CDP-Cho-Mg(2+) crystals, but the monomer is probably the biologically functional unit. Requires Mg(2+) as cofactor.

It catalyses the reaction phosphocholine + CTP + H(+) = CDP-choline + diphosphate. It functions in the pathway cell wall biogenesis; teichoic acid biosynthesis. It participates in cell wall biogenesis; lipoteichoic acid biosynthesis. Its activity is regulated as follows. Mg(2+) in slight excess of CTP gives maximal activity. Strongly inhibited by Ca(2+) and several other metal ions, such as Cd(2+), Co(2+), Cu(2+), Mn(2+), Ni(2+), Zn(2+) and Fe(2+). Also inhibited by Mg(2+) at high concentrations. CDP-Cho is a competitive inhibitor with respect to CTP, whereas diphosphate is a mixed-type inhibitor with respect to CTP. Functionally, cytidylyltransferase involved in the biosynthesis of the phosphocholine containing cell wall constituents, teichoic acid and lipoteichoic acid, which are essential for cell separation and pathogenesis. Catalyzes the activation of phosphocholine (P-Cho) to CDP-choline (CDP-Cho). Can also use phosphoethanolamine and 2-aminoethylphosphonate, with much lower efficiency. Shows lower activity with dCTP, weak activity with ATP and no activity with GTP, TTP, UTP, dATP, dGTP and dTTP. This is Choline-phosphate cytidylyltransferase from Streptococcus pneumoniae (strain ATCC BAA-255 / R6).